Here is a 201-residue protein sequence, read N- to C-terminus: Recombination protein RecR (201 aa).

Residues 60-75 (CSRCGNVDTVDPCTVC) form a C4-type zinc finger. Residues 83 to 178 (SVIIVVEDVS…KITRLAHGVP (96 aa)) form the Toprim domain.

It belongs to the RecR family.

Its function is as follows. May play a role in DNA repair. It seems to be involved in an RecBC-independent recombinational process of DNA repair. It may act with RecF and RecO. The sequence is that of Recombination protein RecR from Rhizobium etli (strain ATCC 51251 / DSM 11541 / JCM 21823 / NBRC 15573 / CFN 42).